We begin with the raw amino-acid sequence, 375 residues long: Actin, cytoplasmic (375 aa).

The protein belongs to the actin family.

It localises to the cytoplasm. The protein localises to the cytoskeleton. The enzyme catalyses ATP + H2O = ADP + phosphate + H(+). Actins are highly conserved proteins that are involved in various types of cell motility and are ubiquitously expressed in all eukaryotic cells. The polypeptide is Actin, cytoplasmic (MIC-ACT-1) (Sterkiella nova (Ciliate)).